We begin with the raw amino-acid sequence, 267 residues long: Palmitoyltransferase ZDHHC12 (267 aa).

Residues 1–9 (MAPWALLSP) lie on the Cytoplasmic side of the membrane. The chain crosses the membrane as a helical span at residues 10–30 (GVLVRTGHTVLTWGITLVLFL). Residues 31–43 (HDTELRQWEEQGE) are Lumenal-facing. Residues 44 to 64 (LLLPLTFLLLVLGSLLLYLAV) traverse the membrane as a helical segment. The Cytoplasmic segment spans residues 65–140 (SLMDPGYVNV…ENCVGERNHP (76 aa)). The DHHC domain occupies 97-147 (RRCRYCLVLQPLRARHCRECRRCVRRYDHHCPWMENCVGERNHPLFVVYLA). The active-site S-palmitoyl cysteine intermediate is cysteine 127. The helical transmembrane segment at 141-161 (LFVVYLALQLVVLLWGLYLAW) threads the bilayer. Residues 162-178 (SGLRFFQPWGQWLRSSG) lie on the Lumenal side of the membrane. A helical membrane pass occupies residues 179–199 (LLFATFLLLSLFSLVASLLLV). Topologically, residues 200–267 (SHLYLVASNT…EEEEGSSPAV (68 aa)) are cytoplasmic.

This sequence belongs to the DHHC palmitoyltransferase family. Widely expressed.

The protein localises to the golgi apparatus membrane. It is found in the endoplasmic reticulum membrane. It catalyses the reaction L-cysteinyl-[protein] + hexadecanoyl-CoA = S-hexadecanoyl-L-cysteinyl-[protein] + CoA. Its function is as follows. Palmitoyltransferase that catalyzes the addition of palmitate onto various protein substrates. Has a palmitoyltransferase activity toward gephyrin/GPHN, regulating its clustering at synapses and its function in gamma-aminobutyric acid receptor clustering. Thereby, indirectly regulates GABAergic synaptic transmission. Negatively regulates NLRP3-driven inflammation. Catalyzes NLRP3 palmitoylation, leading to its degradation via the chaperone-mediated autophagy (CMA) process. This is Palmitoyltransferase ZDHHC12 from Homo sapiens (Human).